Consider the following 483-residue polypeptide: MSWIINGASHDWEVVIGLEVHAQIVSNSKLFSGASTEISVDPNSHVALLDVAMPGVLPVTNEYCIVQAVKTALALSCEVKKYSVFDRKNYFYPDLSFGYQITQFYHPIAKNGHIMLDESADNKKIGIARIHIEQDAGKSLHVGDKTCIDFNRAGVALMEIVTDPDLRSPEEAAEYLKKLRIILRYIGACSGDMENGALRCDANVSVRKVGESALGVRSEIKNLNSIKYVAQAIKYEAMRHVEVLESGGKVEQSTLLYDVDTGTTRTMRSKEDVCDYRYFPDPDLLPLEITDEFIASIRDTLPELPMAKMSRYMNDFSLSRYDAVILSSDRDVAEYYDEVMQRNLPGDLVAAWVTGELFGMLNKRGMCISDSPVRADALGDLLRLMVDGTISGKMAKQVFATMFETGKSASKIVEEEGLQQIADEGVLSAMVERVLEKNPDKVQQYKQGKEKLFGYFVGQIMQETKGRANPEVLNALIQSKLSQ.

This sequence belongs to the GatB/GatE family. GatB subfamily. As to quaternary structure, heterotrimer of A, B and C subunits.

The catalysed reaction is L-glutamyl-tRNA(Gln) + L-glutamine + ATP + H2O = L-glutaminyl-tRNA(Gln) + L-glutamate + ADP + phosphate + H(+). The enzyme catalyses L-aspartyl-tRNA(Asn) + L-glutamine + ATP + H2O = L-asparaginyl-tRNA(Asn) + L-glutamate + ADP + phosphate + 2 H(+). Its function is as follows. Allows the formation of correctly charged Asn-tRNA(Asn) or Gln-tRNA(Gln) through the transamidation of misacylated Asp-tRNA(Asn) or Glu-tRNA(Gln) in organisms which lack either or both of asparaginyl-tRNA or glutaminyl-tRNA synthetases. The reaction takes place in the presence of glutamine and ATP through an activated phospho-Asp-tRNA(Asn) or phospho-Glu-tRNA(Gln). In Anaplasma phagocytophilum (strain HZ), this protein is Aspartyl/glutamyl-tRNA(Asn/Gln) amidotransferase subunit B.